The following is a 408-amino-acid chain: Aminomethyltransferase, mitochondrial (408 aa).

The transit peptide at 1 to 30 (MRGGGLWQLGQSVTRRLAQAEKKVIARRCF) directs the protein to the mitochondrion. 3 residues coordinate substrate: Glu-235, Arg-266, and Tyr-404.

The protein belongs to the GcvT family. As to quaternary structure, the glycine cleavage system is composed of four proteins: P, T, L and H.

The protein resides in the mitochondrion. It catalyses the reaction N(6)-[(R)-S(8)-aminomethyldihydrolipoyl]-L-lysyl-[protein] + (6S)-5,6,7,8-tetrahydrofolate = N(6)-[(R)-dihydrolipoyl]-L-lysyl-[protein] + (6R)-5,10-methylene-5,6,7,8-tetrahydrofolate + NH4(+). The glycine cleavage system catalyzes the degradation of glycine. In Mesembryanthemum crystallinum (Common ice plant), this protein is Aminomethyltransferase, mitochondrial (GDCST).